A 245-amino-acid polypeptide reads, in one-letter code: 5-oxoprolinase subunit A (245 aa).

It belongs to the LamB/PxpA family. In terms of assembly, forms a complex composed of PxpA, PxpB and PxpC.

It carries out the reaction 5-oxo-L-proline + ATP + 2 H2O = L-glutamate + ADP + phosphate + H(+). Its function is as follows. Catalyzes the cleavage of 5-oxoproline to form L-glutamate coupled to the hydrolysis of ATP to ADP and inorganic phosphate. This Yersinia enterocolitica serotype O:8 / biotype 1B (strain NCTC 13174 / 8081) protein is 5-oxoprolinase subunit A.